The chain runs to 509 residues: Dihydrolipoyl dehydrogenase, mitochondrial (509 aa).

The transit peptide at 1 to 35 (MQSWSRVYCSLAKRGHFNRISHGLQGLSAVPLRTY) directs the protein to the mitochondrion. Lys66 carries the post-translational modification N6-acetyllysine; alternate. Lys66 carries the N6-succinyllysine; alternate modification. FAD contacts are provided by residues 71-80 (EKNETLGGTC) and Lys89. Cysteines 80 and 85 form a disulfide. An N6-acetyllysine; alternate mark is found at Lys104, Lys122, Lys132, and Lys143. N6-succinyllysine; alternate occurs at positions 104, 122, 132, and 143. Residue Gly154 coordinates FAD. N6-succinyllysine is present on residues Lys159 and Lys166. 183 to 185 (TGS) provides a ligand contact to FAD. NAD(+) contacts are provided by residues 220 to 227 (GAGVIGVE) and Glu243. Residues Lys273 and Lys277 each carry the N6-succinyllysine modification. Residue Val278 coordinates NAD(+). Residues Ser285 and Ser297 each carry the phosphoserine modification. Gly314 provides a ligand contact to NAD(+). An N6-acetyllysine modification is found at Lys346. Residues Asp355 and 361 to 364 (MLAH) contribute to the FAD site. Position 410 is an N6-acetyllysine; alternate (Lys410). Lys410 bears the N6-succinyllysine; alternate mark. Lys417 and Lys420 each carry N6-acetyllysine. Residue Lys430 is modified to N6-succinyllysine. His487 serves as the catalytic Proton acceptor. Residue Ser502 is modified to Phosphoserine. Lys505 carries the N6-acetyllysine; alternate modification. Lys505 carries the N6-succinyllysine; alternate modification.

This sequence belongs to the class-I pyridine nucleotide-disulfide oxidoreductase family. As to quaternary structure, homodimer. Part of the multimeric pyruvate dehydrogenase complex that contains multiple copies of pyruvate dehydrogenase (subunits PDHA (PDHA1 or PDHA2) and PDHB, E1), dihydrolipoamide acetyltransferase (DLAT, E2) and lipoamide dehydrogenase (DLD, E3). These subunits are bound to an inner core composed of about 48 DLAT and 12 PDHX molecules (by non covalent bonds). The 2-oxoglutarate dehydrogenase complex is composed of OGDH (2-oxoglutarate dehydrogenase; E1), DLST (dihydrolipoamide succinyltransferase; E2), DLD (dihydrolipoamide dehydrogenase; E3) and the assembly factor KGD4. It contains multiple copies of the three enzymatic components (E1, E2 and E3). In the nucleus, the 2-oxoglutarate dehydrogenase complex associates with KAT2A. Interacts with PDHX. It depends on FAD as a cofactor. In terms of processing, tyrosine phosphorylated.

The protein resides in the mitochondrion matrix. It localises to the nucleus. The protein localises to the cell projection. It is found in the cilium. Its subcellular location is the flagellum. The protein resides in the cytoplasmic vesicle. It localises to the secretory vesicle. The protein localises to the acrosome. It carries out the reaction N(6)-[(R)-dihydrolipoyl]-L-lysyl-[protein] + NAD(+) = N(6)-[(R)-lipoyl]-L-lysyl-[protein] + NADH + H(+). Lipoamide dehydrogenase is a component of the glycine cleavage system as well as an E3 component of three alpha-ketoacid dehydrogenase complexes (pyruvate-, alpha-ketoglutarate-, and branched-chain amino acid-dehydrogenase complex). The 2-oxoglutarate dehydrogenase complex is mainly active in the mitochondrion. A fraction of the 2-oxoglutarate dehydrogenase complex also localizes in the nucleus and is required for lysine succinylation of histones: associates with KAT2A on chromatin and provides succinyl-CoA to histone succinyltransferase KAT2A. In monomeric form may have additional moonlighting function as serine protease. Involved in the hyperactivation of spermatazoa during capacitation and in the spermatazoal acrosome reaction. This Macaca fascicularis (Crab-eating macaque) protein is Dihydrolipoyl dehydrogenase, mitochondrial (DLD).